The chain runs to 3032 residues: DmX-like protein 2 (3032 aa).

WD repeat units lie at residues 108–145 (FLSS…ILEE), 167–207 (KTSV…KSSI), and 230–278 (AHPR…EDCL). Ser326 is modified (phosphoserine). Positions 418 to 486 (QLDHESDDAD…HPRPSISMPL (69 aa)) are disordered. The span at 422–434 (ESDDADREDEERS) shows a compositional bias: acidic residues. Basic and acidic residues predominate over residues 435–474 (QDERERGLRMKLDHELSLDRESEAGTGSSEHEDGEREGSP). Ser473 is modified (phosphoserine). The WD 4 repeat unit spans residues 492-532 (DRKIETLLTEWNKNPDMLFTIHPVDGTFLVWHVKYLDEYNP). The tract at residues 577 to 598 (PSQQEMMSVDSPHGSQLHSPSH) is disordered. Residue Ser587 is modified to Phosphoserine. Polar residues predominate over residues 589 to 598 (HGSQLHSPSH). 3 WD repeats span residues 594–633 (HSPS…KSAF), 750–802 (LHTS…RKLL), and 879–921 (QPSQ…VQAC). The disordered stretch occupies residues 937 to 958 (VPGQKNLDSSPETSSSMSSVPH). Residues Ser945 and Ser946 each carry the phosphoserine modification. Positions 945 to 958 (SSPETSSSMSSVPH) are enriched in low complexity. A WD 8 repeat occupies 1001-1038 (LSSSSIYPVCLAPYLVVTTCSDNKVRFWKCCMETNSLG). Phosphoserine is present on residues Ser1141, Ser1144, and Ser1152. 2 WD repeats span residues 1164-1205 (PNIK…VSDQ) and 1245-1285 (GTPS…GNVD). A phosphoserine mark is found at Ser1288 and Ser1399. Thr1416 carries the phosphothreonine modification. The tract at residues 1443-1464 (RISEDSTKKPQSYEDHIESQSE) is disordered. The span at 1444–1461 (ISEDSTKKPQSYEDHIES) shows a compositional bias: basic and acidic residues. Residue Ser1856 is modified to Phosphoserine. Positions 1922-1953 (QLDSVSGRMENGPSESKPVSRSDGGSGADWSA) are disordered. The residue at position 2017 (Thr2017) is a Phosphothreonine. Positions 2117–2146 (GSYERHQIERRRLQAKREHAERRKLWLQKN) form a coiled coil. Ser2394 and Ser2636 each carry phosphoserine. Low complexity predominate over residues 2722–2732 (QPGAASHSSSQ). Positions 2722–2744 (QPGAASHSSSQPHPPPSLPWLGS) are disordered. WD repeat units lie at residues 2757–2796 (RNLH…QLVC), 2800–2839 (AGNA…SNPK), 2846–2888 (CHSK…GNSL), 2894–2933 (CHDH…LIHT), 2936–2975 (AHDS…LIHS), and 2988–3026 (NIGA…NIPN).

In terms of assembly, interacts with MADD and RAB3GAP. Expressed in the brain and pituitary gland. Detected in the hippocampus, dentate gyrus, hypothalamus, pyriform cortex and the granular and molecular layers of the cerebellum of adult animals. In the hypothalamus, expression is observed in the arcuate nucleus, the ME, the organum vasculosum of the lamina terminalis, and the subfornical organ, the subcommissural organ, and the suprachiasmatic nucleus. Both tanycytes and hypothalamic neurosecretory neurons express the protein. Expressed in the inner and outer hair cells as well as in the spiral ganglion neurons. Expressed in insulin-secreting cells of the islets of Langerhans in the pancreas.

The protein localises to the cytoplasmic vesicle. It is found in the secretory vesicle. Its subcellular location is the synaptic vesicle membrane. It localises to the neuronal dense core vesicle. Its function is as follows. May serve as a scaffold protein for MADD and RAB3GA on synaptic vesicles of neuronal and endocrine homeostatic processes. Plays a role in the brain as a key controller of neuronal and endocrine homeostatic processes. This chain is DmX-like protein 2 (Dmxl2), found in Mus musculus (Mouse).